Here is a 71-residue protein sequence, read N- to C-terminus: Movement protein TGBp3 (71 aa).

The Lumenal portion of the chain corresponds to 1–3 (MEA). A helical membrane pass occupies residues 4–26 (GAYLNAIIFVLVATIIAVISVGL). Over 27 to 71 (TQTEPCTIRITGESITVHACHLDSETIKALATLKPLSLERLSFHQ) the chain is Cytoplasmic.

This sequence belongs to the Tymovirales TGBp3 protein family.

It is found in the host endoplasmic reticulum membrane. Functionally, plays a role in viral cell-to-cell propagation, by facilitating genome transport to neighboring plant cells through plasmosdesmata. May induce the formation of granular vesicles derived from the Endoplasmic reticulum, which align on actin filaments. The polypeptide is Movement protein TGBp3 (Brassica campestris (Field mustard)).